Here is a 70-residue protein sequence, read N- to C-terminus: Small ribosomal subunit protein eS17 (70 aa).

Belongs to the eukaryotic ribosomal protein eS17 family.

The chain is Small ribosomal subunit protein eS17 from Methanopyrus kandleri (strain AV19 / DSM 6324 / JCM 9639 / NBRC 100938).